We begin with the raw amino-acid sequence, 288 residues long: Syntaxin-1B (288 aa).

The segment covering 1 to 13 has biased composition (basic and acidic residues); that stretch reads MKDRTQELRSAKD. The interval 1-20 is disordered; sequence MKDRTQELRSAKDSDDEEEV. Residues 1–264 lie on the Cytoplasmic side of the membrane; that stretch reads MKDRTQELRS…KYQSKARRKK (264 aa). Phosphoserine occurs at positions 10 and 14. Residues 29-104 adopt a coiled-coil conformation; sequence MDEFFEQVEE…IEQSIEQEEG (76 aa). The region spanning 191–253 is the t-SNARE coiled-coil homology domain; that stretch reads LNEIETRHNE…ERAVSDTKKA (63 aa). The chain crosses the membrane as a helical; Anchor for type IV membrane protein span at residues 265–288; that stretch reads IMIIICCVVLGVVLASSIGGTLGL.

The protein belongs to the syntaxin family. Interacts with OTOF. Interacts with SYT6 and SYT8; the interaction is Ca(2+)-dependent. Phosphorylated by CK2. Post-translationally, (Microbial infection) Targeted and hydrolyzed by C.botulinum neurotoxin type C (BoNT/C); cleavage by BoNT/C inhibits neurotransmitter release. Probably hydrolyzes the 252-Lys-|-Ala-253 bond.

Its subcellular location is the membrane. Potentially involved in docking of synaptic vesicles at presynaptic active zones. May mediate Ca(2+)-regulation of exocytosis acrosomal reaction in sperm. This chain is Syntaxin-1B (STX1B), found in Bos taurus (Bovine).